The following is a 525-amino-acid chain: ATP synthase subunit alpha (525 aa).

An ATP-binding site is contributed by 169–176 (GDRQTGKT).

It belongs to the ATPase alpha/beta chains family. In terms of assembly, F-type ATPases have 2 components, CF(1) - the catalytic core - and CF(0) - the membrane proton channel. CF(1) has five subunits: alpha(3), beta(3), gamma(1), delta(1), epsilon(1). CF(0) has three main subunits: a(1), b(2) and c(9-12). The alpha and beta chains form an alternating ring which encloses part of the gamma chain. CF(1) is attached to CF(0) by a central stalk formed by the gamma and epsilon chains, while a peripheral stalk is formed by the delta and b chains.

Its subcellular location is the cell membrane. The enzyme catalyses ATP + H2O + 4 H(+)(in) = ADP + phosphate + 5 H(+)(out). Its function is as follows. Produces ATP from ADP in the presence of a proton gradient across the membrane. The alpha chain is a regulatory subunit. The sequence is that of ATP synthase subunit alpha from Mesoplasma florum (strain ATCC 33453 / NBRC 100688 / NCTC 11704 / L1) (Acholeplasma florum).